The sequence spans 185 residues: Class I hydrophobin SC6 (185 aa).

Residues 1-17 (MVSRVLALISVAMLVGA) form the signal peptide. The segment at 70 to 104 (HIPEVTGSSTEEATSSSTWSGASSKPTDSAPTQCN) is disordered. Residues 75–93 (TGSSTEEATSSSTWSGASS) show a composition bias toward low complexity. A compositionally biased stretch (polar residues) spans 94–104 (KPTDSAPTQCN). 4 cysteine pairs are disulfide-bonded: Cys-103–Cys-164, Cys-110–Cys-158, Cys-111–Cys-144, and Cys-165–Cys-178.

This sequence belongs to the fungal hydrophobin family. In terms of assembly, self-assembles to form functional amyloid fibrils called rodlets. Self-assembly into fibrillar rodlets occurs spontaneously at hydrophobic:hydrophilic interfaces and the rodlets further associate laterally to form amphipathic monolayers.

Its subcellular location is the secreted. The protein resides in the cell wall. In terms of biological role, aerial growth, conidiation, and dispersal of filamentous fungi in the environment rely upon a capability of their secreting small amphipathic proteins called hydrophobins (HPBs) with low sequence identity. Class I can self-assemble into an outermost layer of rodlet bundles on aerial cell surfaces, conferring cellular hydrophobicity that supports fungal growth, development and dispersal; whereas Class II form highly ordered films at water-air interfaces through intermolecular interactions but contribute nothing to the rodlet structure. SC6 is a dikaryon-specific class I hydrophobin that contributes to the formation of aerial hyphae and fruiting bodies. This chain is Class I hydrophobin SC6, found in Schizophyllum commune (Split gill fungus).